The sequence spans 106 residues: Ig kappa chain C region, A allele (106 aa).

Positions 5 to 102 constitute an Ig-like domain; sequence PTVSIFPPSM…SSSPVVKSFN (98 aa). C26 and C86 are oxidised to a cystine.

This chain is Ig kappa chain C region, A allele, found in Rattus norvegicus (Rat).